The sequence spans 183 residues: Adenine phosphoribosyltransferase (183 aa).

It belongs to the purine/pyrimidine phosphoribosyltransferase family. In terms of assembly, homodimer.

The protein localises to the cytoplasm. It catalyses the reaction AMP + diphosphate = 5-phospho-alpha-D-ribose 1-diphosphate + adenine. It participates in purine metabolism; AMP biosynthesis via salvage pathway; AMP from adenine: step 1/1. Functionally, catalyzes a salvage reaction resulting in the formation of AMP, that is energically less costly than de novo synthesis. This is Adenine phosphoribosyltransferase from Sodalis glossinidius (strain morsitans).